Reading from the N-terminus, the 751-residue chain is Centrosomal protein of 68 kDa (751 aa).

Composition is skewed to basic and acidic residues over residues 1 to 17 (MALG…EDTK) and 86 to 96 (ASREPVAERSE). The interval 1–253 (MALGEEKAEA…PQPVFSGGDA (253 aa)) is disordered. Composition is skewed to polar residues over residues 131 to 144 (LPQT…TTIC) and 163 to 175 (APSS…SQWK). Over residues 176–200 (SMPSPGSAAPQPSSCSVSASSTGSS) the composition is skewed to low complexity. Ser326 is modified (phosphoserine). Residues 339 to 348 (STLKSPTNVF) show a composition bias toward polar residues. 3 disordered regions span residues 339–474 (STLK…ESDD), 511–545 (SPLE…SGDP), and 590–611 (RLDR…KGGE). Basic and acidic residues-rich tracts occupy residues 399–416 (GSRD…RGAK) and 433–450 (RTRD…EKRT). Over residues 451–461 (SQSARRPTCTE) the composition is skewed to polar residues. A phosphoserine mark is found at Ser466 and Ser472. Low complexity predominate over residues 520–537 (GPASLPSSSSQSQLPPGA).

Interacts with CNTLN; the interaction recruits CEP68 to the centrosome. Interacts with the SCF(FBXW11) complex which contains SKP1, CUL1 and FBXW11; the interaction is probably mediated by FBXW11 and the complex also contains CDK5RAP2 and PCNT. Also interacts with F-box protein BTRC. Interacts with serine/threonine-protein kinase PLK1; the interaction leads to phosphorylation of CEP68 and its subsequent degradation. Interacts with NEK2; the interaction leads to phosphorylation of CEP68. Post-translationally, phosphorylation by PLK1 is required for binding to BTRC in prometaphase. Phosphorylated directly or indirectly by NEK2. NEK2-mediated phosphorylation promotes CEP68 dissociation from the centrosome and its degradation at the onset of mitosis. In terms of processing, ubiquitinated and targeted for proteasomal degradation in early mitosis by the SCF(BTRC) and/or SCF(FBXW11) E3 ubiquitin-protein ligase complexes. Degradation is complete by prometaphase and is required for removal of CDK5RAP2 from the peripheral pericentriolar material and subsequent centriole separation.

Its subcellular location is the cytoplasm. The protein localises to the cytoskeleton. It localises to the microtubule organizing center. It is found in the centrosome. Its function is as follows. Involved in maintenance of centrosome cohesion, probably as part of a linker structure which prevents centrosome splitting. Required for localization of CDK5RAP2 to the centrosome during interphase. Contributes to CROCC/rootletin filament formation. The protein is Centrosomal protein of 68 kDa (CEP68) of Pongo abelii (Sumatran orangutan).